We begin with the raw amino-acid sequence, 366 residues long: tRNA/tmRNA (uracil-C(5))-methyltransferase (366 aa).

S-adenosyl-L-methionine-binding residues include glutamine 190, tyrosine 218, asparagine 223, glutamate 239, and aspartate 299. Cysteine 324 functions as the Nucleophile in the catalytic mechanism. The active-site Proton acceptor is glutamate 358.

The protein belongs to the class I-like SAM-binding methyltransferase superfamily. RNA M5U methyltransferase family. TrmA subfamily.

The enzyme catalyses uridine(54) in tRNA + S-adenosyl-L-methionine = 5-methyluridine(54) in tRNA + S-adenosyl-L-homocysteine + H(+). It catalyses the reaction uridine(341) in tmRNA + S-adenosyl-L-methionine = 5-methyluridine(341) in tmRNA + S-adenosyl-L-homocysteine + H(+). Dual-specificity methyltransferase that catalyzes the formation of 5-methyluridine at position 54 (m5U54) in all tRNAs, and that of position 341 (m5U341) in tmRNA (transfer-mRNA). This chain is tRNA/tmRNA (uracil-C(5))-methyltransferase, found in Salmonella typhi.